The primary structure comprises 1796 residues: Y' element ATP-dependent helicase protein 1 copy 5 (1796 aa).

Residues 743–767 form a disordered region; the sequence is AGEAASSDHDQKISRVTRKRPREPK. One can recognise a Helicase ATP-binding domain in the interval 797–974; sequence EIYMADTPSV…LQRIGLTGLA (178 aa). 810-817 is an ATP binding site; sequence APPGYGKT. The region spanning 1031 to 1180 is the Helicase C-terminal domain; it reads KLLLALFEIE…EFYGLESKKG (150 aa). 2 disordered regions span residues 1254–1278 and 1294–1421; these read ANAS…NVRT and TTES…DINK. The segment covering 1294–1397 has biased composition (low complexity); that stretch reads TTESTNSSTN…ATTTESTNAS (104 aa). Residues 1398-1421 are compositionally biased toward basic and acidic residues; that stretch reads AKEDANKDGNAEDNRFHPVTDINK.

The protein belongs to the helicase family. Yeast subtelomeric Y' repeat subfamily.

Its function is as follows. Catalyzes DNA unwinding and is involved in telomerase-independent telomere maintenance. The chain is Y' element ATP-dependent helicase protein 1 copy 5 (YRF1-5) from Saccharomyces cerevisiae (strain ATCC 204508 / S288c) (Baker's yeast).